Consider the following 434-residue polypeptide: Glutamyl-tRNA reductase (434 aa).

Substrate is bound by residues 57 to 60 (TCNR), serine 116, 121 to 123 (ETQ), and glutamine 127. Cysteine 58 serves as the catalytic Nucleophile. Position 196 to 201 (196 to 201 (GAGEMI)) interacts with NADP(+).

This sequence belongs to the glutamyl-tRNA reductase family. Homodimer.

The catalysed reaction is (S)-4-amino-5-oxopentanoate + tRNA(Glu) + NADP(+) = L-glutamyl-tRNA(Glu) + NADPH + H(+). It participates in porphyrin-containing compound metabolism; protoporphyrin-IX biosynthesis; 5-aminolevulinate from L-glutamyl-tRNA(Glu): step 1/2. Its function is as follows. Catalyzes the NADPH-dependent reduction of glutamyl-tRNA(Glu) to glutamate 1-semialdehyde (GSA). The sequence is that of Glutamyl-tRNA reductase from Burkholderia pseudomallei (strain 1106a).